The primary structure comprises 424 residues: Enolase (424 aa).

Gln162 serves as a coordination point for (2R)-2-phosphoglycerate. Glu204 serves as the catalytic Proton donor. The Mg(2+) site is built by Asp241, Glu284, and Asp311. (2R)-2-phosphoglycerate contacts are provided by Lys336, Arg365, Ser366, and Lys387. The active-site Proton acceptor is the Lys336.

This sequence belongs to the enolase family. Requires Mg(2+) as cofactor.

Its subcellular location is the cytoplasm. It localises to the secreted. The protein resides in the cell surface. The catalysed reaction is (2R)-2-phosphoglycerate = phosphoenolpyruvate + H2O. It participates in carbohydrate degradation; glycolysis; pyruvate from D-glyceraldehyde 3-phosphate: step 4/5. Its function is as follows. Catalyzes the reversible conversion of 2-phosphoglycerate (2-PG) into phosphoenolpyruvate (PEP). It is essential for the degradation of carbohydrates via glycolysis. In Parvibaculum lavamentivorans (strain DS-1 / DSM 13023 / NCIMB 13966), this protein is Enolase.